Consider the following 400-residue polypeptide: Ubiquitin-like modifier-activating enzyme 5 (400 aa).

Positions 76, 97, 120, 143, and 177 each coordinate ATP. The Zn(2+) site is built by Cys-219 and Cys-222. The active-site Glycyl thioester intermediate is Cys-243. Residues Cys-296 and Cys-301 each coordinate Zn(2+).

It belongs to the ubiquitin-activating E1 family. UBA5 subfamily.

In terms of biological role, E1-like enzyme which activates UFM1. This Drosophila virilis (Fruit fly) protein is Ubiquitin-like modifier-activating enzyme 5.